The sequence spans 1235 residues: Receptor-type adenylate cyclase ESAG 4 (1235 aa).

A disordered region spans residues Met-1–His-20. At Met-1 to Ala-32 the chain is on the cytoplasmic side. Residues Met-33 to Leu-53 form a helical membrane-spanning segment. The Extracellular portion of the chain corresponds to Pro-54–Ser-858. Asn-63, Asn-90, Asn-97, Asn-362, Asn-531, Asn-566, Asn-705, and Asn-830 each carry an N-linked (GlcNAc...) asparagine glycan. Residues Leu-859–Val-879 form a helical membrane-spanning segment. Residues Pro-880–Leu-1235 are Cytoplasmic-facing. Residues Thr-900–Glu-1054 enclose the Guanylate cyclase domain. Mg(2+) is bound by residues Asp-905 and Asp-948.

The protein belongs to the adenylyl cyclase class-3 family. The cofactor is Mg(2+).

It localises to the membrane. The catalysed reaction is ATP = 3',5'-cyclic AMP + diphosphate. Functionally, could act as a receptor for an unknown ligand. The protein is Receptor-type adenylate cyclase ESAG 4 (ESAG4) of Trypanosoma brucei brucei.